Reading from the N-terminus, the 552-residue chain is Urocanate hydratase (552 aa).

NAD(+) contacts are provided by residues 49 to 50 (GG), Gln127, 173 to 175 (GMG), Asp193, 239 to 240 (NA), 260 to 264 (QTSAH), 270 to 271 (YI), and Tyr319. Residue Cys407 is part of the active site. Gly489 is a binding site for NAD(+).

The protein belongs to the urocanase family. Requires NAD(+) as cofactor.

It localises to the cytoplasm. The enzyme catalyses 4-imidazolone-5-propanoate = trans-urocanate + H2O. It functions in the pathway amino-acid degradation; L-histidine degradation into L-glutamate; N-formimidoyl-L-glutamate from L-histidine: step 2/3. Functionally, catalyzes the conversion of urocanate to 4-imidazolone-5-propionate. The polypeptide is Urocanate hydratase (Bacillus cereus (strain G9842)).